The following is a 51-amino-acid chain: Large ribosomal subunit protein eL39 (51 aa).

Residues 1–23 (MSALKKSFIKRKLAKKQKQNRPM) form a disordered region. Positions 7–19 (SFIKRKLAKKQKQ) are enriched in basic residues.

The protein belongs to the eukaryotic ribosomal protein eL39 family. As to quaternary structure, interacts with impact.

The polypeptide is Large ribosomal subunit protein eL39 (rpl-39) (Caenorhabditis elegans).